A 603-amino-acid polypeptide reads, in one-letter code: Protein regulator of cytokinesis 1 (603 aa).

A dimerization region spans residues 1–341; that stretch reads MRRSEVLADE…HLHDAEIVRL (341 aa). Coiled-coil stretches lie at residues 34–65, 96–136, 211–246, 272–304, and 383–463; these read EQRL…RERL, ILQL…DILC, SLEN…IREL, RNAL…LAQF, and GNLL…AEML. Residues 342–466 form a spectrin-fold region; the sequence is RNYYDVHKEL…QTEAEMLYGS (125 aa). Residues 447–459 are compositionally biased toward basic and acidic residues; sequence KQERQLKNKKQTE. The tract at residues 447–502 is disordered; sequence KQERQLKNKKQTEAEMLYGSTPRTPSKRPGQTPKKSGKMNTTTMSSATPNSSIRPV. A unstructured, Arg/Lys rich region spans residues 467 to 603; the sequence is TPRTPSKRPG…RILNSTNIQS (137 aa). Position 470 is a phosphothreonine; by CDK1 (Thr-470). The span at 484-499 shows a compositional bias: polar residues; that stretch reads KMNTTTMSSATPNSSI. 2 positions are modified to phosphoserine: Ser-510 and Ser-568. At Thr-575 the chain carries Phosphothreonine. The segment at 583-603 is disordered; the sequence is LSKASRSDATSRILNSTNIQS. Positions 589–603 are enriched in polar residues; that stretch reads SDATSRILNSTNIQS. The residue at position 599 (Thr-599) is a Phosphothreonine; by PLK1.

Belongs to the MAP65/ASE1 family. In terms of assembly, homodimer. Interacts with the C-terminal Rho-GAP domain and the basic region of RACGAP1. The interaction with RACGAP1 inhibits its GAP activity towards CDC42 in vitro, which may be required for maintaining normal spindle morphology. Interacts (via N-terminus) with the C-terminus of CENPE (via C-terminus); the interaction occurs during late mitosis. Interacts (via N-terminus) with KIF4A (via C-terminus); the interaction is required for the progression of mitosis. Interacts (via N-terminus) with KIF23 (via C-terminus); the interaction occurs during late mitosis. Interacts with KIF14 and KIF20A. Interacts with PLK1. Interacts with KIF20B. Interacts with CCDC66. Post-translationally, phosphorylation by CDK1 in early mitosis holds PRC1 in an inactive monomeric state, during the metaphase to anaphase transition, PRC1 is dephosphorylated, promoting interaction with KIF4A, which then translocates PRC1 along mitotic spindles to the plus ends of antiparallel interdigitating microtubules. Dephosphorylation also promotes MT-bundling activity by allowing dimerization. Phosphorylation by CDK1 prevents PLK1-binding: upon degradation of CDK1 at anaphase and dephosphorylation, it is then phosphorylated by PLK1, leading to cytokinesis.

Its subcellular location is the nucleus. It is found in the cytoplasm. The protein localises to the cytoskeleton. It localises to the spindle pole. The protein resides in the midbody. Functionally, key regulator of cytokinesis that cross-links antiparrallel microtubules at an average distance of 35 nM. Essential for controlling the spatiotemporal formation of the midzone and successful cytokinesis. Required for KIF14 localization to the central spindle and midbody. Required to recruit PLK1 to the spindle. Stimulates PLK1 phosphorylation of RACGAP1 to allow recruitment of ECT2 to the central spindle. Acts as an oncogene for promoting bladder cancer cells proliferation, apoptosis inhibition and carcinogenic progression. This is Protein regulator of cytokinesis 1 from Mus musculus (Mouse).